Consider the following 394-residue polypeptide: Elongation factor Tu (394 aa).

The tr-type G domain occupies 10-204 (KPHVNIGTIG…AVDSYIPQPV (195 aa)). The interval 19–26 (GHVDHGKT) is G1. Residue 19 to 26 (GHVDHGKT) coordinates GTP. A Mg(2+)-binding site is contributed by Thr-26. The tract at residues 60 to 64 (GITIS) is G2. The G3 stretch occupies residues 81-84 (DCPG). Residues 81-85 (DCPGH) and 136-139 (NKVD) each bind GTP. The tract at residues 136–139 (NKVD) is G4. The G5 stretch occupies residues 174-176 (SAL).

Belongs to the TRAFAC class translation factor GTPase superfamily. Classic translation factor GTPase family. EF-Tu/EF-1A subfamily. Monomer.

Its subcellular location is the cytoplasm. The catalysed reaction is GTP + H2O = GDP + phosphate + H(+). In terms of biological role, GTP hydrolase that promotes the GTP-dependent binding of aminoacyl-tRNA to the A-site of ribosomes during protein biosynthesis. This chain is Elongation factor Tu, found in Rickettsia canadensis (strain McKiel).